The sequence spans 96 residues: Aspartyl/glutamyl-tRNA(Asn/Gln) amidotransferase subunit C (96 aa).

Belongs to the GatC family. In terms of assembly, heterotrimer of A, B and C subunits.

The enzyme catalyses L-glutamyl-tRNA(Gln) + L-glutamine + ATP + H2O = L-glutaminyl-tRNA(Gln) + L-glutamate + ADP + phosphate + H(+). It catalyses the reaction L-aspartyl-tRNA(Asn) + L-glutamine + ATP + H2O = L-asparaginyl-tRNA(Asn) + L-glutamate + ADP + phosphate + 2 H(+). Allows the formation of correctly charged Asn-tRNA(Asn) or Gln-tRNA(Gln) through the transamidation of misacylated Asp-tRNA(Asn) or Glu-tRNA(Gln) in organisms which lack either or both of asparaginyl-tRNA or glutaminyl-tRNA synthetases. The reaction takes place in the presence of glutamine and ATP through an activated phospho-Asp-tRNA(Asn) or phospho-Glu-tRNA(Gln). In Chloroflexus aggregans (strain MD-66 / DSM 9485), this protein is Aspartyl/glutamyl-tRNA(Asn/Gln) amidotransferase subunit C.